Consider the following 488-residue polypeptide: Probable glycine dehydrogenase (decarboxylating) subunit 2 (488 aa).

Lys264 bears the N6-(pyridoxal phosphate)lysine mark.

This sequence belongs to the GcvP family. C-terminal subunit subfamily. In terms of assembly, the glycine cleavage system is composed of four proteins: P, T, L and H. In this organism, the P 'protein' is a heterodimer of two subunits. Pyridoxal 5'-phosphate is required as a cofactor.

It carries out the reaction N(6)-[(R)-lipoyl]-L-lysyl-[glycine-cleavage complex H protein] + glycine + H(+) = N(6)-[(R)-S(8)-aminomethyldihydrolipoyl]-L-lysyl-[glycine-cleavage complex H protein] + CO2. In terms of biological role, the glycine cleavage system catalyzes the degradation of glycine. The P protein binds the alpha-amino group of glycine through its pyridoxal phosphate cofactor; CO(2) is released and the remaining methylamine moiety is then transferred to the lipoamide cofactor of the H protein. In Methylococcus capsulatus (strain ATCC 33009 / NCIMB 11132 / Bath), this protein is Probable glycine dehydrogenase (decarboxylating) subunit 2.